Consider the following 120-residue polypeptide: NAD(P)H-quinone oxidoreductase subunit 3, chloroplastic (120 aa).

3 helical membrane passes run 7-27, 64-84, and 89-109; these read YNYF…AFSI, MFAL…PWAM, and LGIP…IGLI.

It belongs to the complex I subunit 3 family. NDH is composed of at least 16 different subunits, 5 of which are encoded in the nucleus.

It is found in the plastid. Its subcellular location is the chloroplast thylakoid membrane. It catalyses the reaction a plastoquinone + NADH + (n+1) H(+)(in) = a plastoquinol + NAD(+) + n H(+)(out). It carries out the reaction a plastoquinone + NADPH + (n+1) H(+)(in) = a plastoquinol + NADP(+) + n H(+)(out). NDH shuttles electrons from NAD(P)H:plastoquinone, via FMN and iron-sulfur (Fe-S) centers, to quinones in the photosynthetic chain and possibly in a chloroplast respiratory chain. The immediate electron acceptor for the enzyme in this species is believed to be plastoquinone. Couples the redox reaction to proton translocation, and thus conserves the redox energy in a proton gradient. This is NAD(P)H-quinone oxidoreductase subunit 3, chloroplastic from Anthoceros angustus (Hornwort).